Consider the following 561-residue polypeptide: uncharacterized protein (561 aa).

The N-terminal stretch at 1–24 (MELGAWRSILYIAFLFAITRHAFC) is a signal peptide. Residues 25–509 (KAVNLVHSPE…GYVYLSEIKQ (485 aa)) are Lumenal-facing. A helical membrane pass occupies residues 510 to 530 (YSSLILISLWISLILFVSFLN). The Cytoplasmic portion of the chain corresponds to 531–561 (RRLILHYSFESVHQLKTLTRKFIYSSLLKQD).

The protein localises to the endoplasmic reticulum membrane. It localises to the golgi apparatus membrane. This is an uncharacterized protein from Schizosaccharomyces pombe (strain 972 / ATCC 24843) (Fission yeast).